Reading from the N-terminus, the 165-residue chain is Thiol peroxidase (165 aa).

The Thioredoxin domain occupies 18–165 (PQVGDVVTDF…PNYDAALAVL (148 aa)). Catalysis depends on cysteine 60, which acts as the Cysteine sulfenic acid (-SOH) intermediate. A disulfide bridge links cysteine 60 with cysteine 94.

Belongs to the peroxiredoxin family. Tpx subfamily. Homodimer.

The enzyme catalyses a hydroperoxide + [thioredoxin]-dithiol = an alcohol + [thioredoxin]-disulfide + H2O. In terms of biological role, thiol-specific peroxidase that catalyzes the reduction of hydrogen peroxide and organic hydroperoxides to water and alcohols, respectively. Plays a role in cell protection against oxidative stress by detoxifying peroxides. The sequence is that of Thiol peroxidase from Pasteurella multocida (strain Pm70).